Consider the following 221-residue polypeptide: Small ribosomal subunit protein uS3 (221 aa).

The KH type-2 domain maps to Ile-39–Lys-107.

The protein belongs to the universal ribosomal protein uS3 family. Part of the 30S ribosomal subunit. Forms a tight complex with proteins S10 and S14.

Its function is as follows. Binds the lower part of the 30S subunit head. Binds mRNA in the 70S ribosome, positioning it for translation. In Desulforamulus reducens (strain ATCC BAA-1160 / DSM 100696 / MI-1) (Desulfotomaculum reducens), this protein is Small ribosomal subunit protein uS3.